The following is a 393-amino-acid chain: Epoxyqueuosine reductase (393 aa).

D154 functions as the Proton donor in the catalytic mechanism. In terms of domain architecture, 4Fe-4S ferredoxin-type spans 196–228 (LPLPVDIPVQEGCHSCVACITSCPTGAIVEPYT). [4Fe-4S] cluster is bound by residues C208, C211, C214, C218, C234, C261, C264, and C268.

Belongs to the QueG family. In terms of assembly, monomer. The cofactor is cob(II)alamin. Requires [4Fe-4S] cluster as cofactor.

The protein localises to the cytoplasm. It carries out the reaction epoxyqueuosine(34) in tRNA + AH2 = queuosine(34) in tRNA + A + H2O. It participates in tRNA modification; tRNA-queuosine biosynthesis. Catalyzes the conversion of epoxyqueuosine (oQ) to queuosine (Q), which is a hypermodified base found in the wobble positions of tRNA(Asp), tRNA(Asn), tRNA(His) and tRNA(Tyr). This chain is Epoxyqueuosine reductase, found in Shewanella oneidensis (strain ATCC 700550 / JCM 31522 / CIP 106686 / LMG 19005 / NCIMB 14063 / MR-1).